Here is a 632-residue protein sequence, read N- to C-terminus: MTHEFTESYDVIVIGAGHAGVEASLATSRMGCKTLLATINLDMLAFMPCNPSIGGSAKGIVVREIDALGGEMGKNIDKTYIQMKMLNTGKGPAVRALRAQADKSLYAREMKHTVEKQANLTLRQTMIDDILVEDGRVVGVLTATGQKFAAKAVVVTTGTALRGEIILGELKYSSGPNNSLASVTLADNLKKLGLEIGRFKTGTPPRVKASSINYDQTEIQPGDDKPNHFSFMSKDADYLKDQIPCWLTYTNQTSHDIINQNLYRAPMFSGVVKGVGPRYCPSIEDKIVRFADKERHQLFLEPEGRDTEEVYVQGLSTSLPEDVQKDLIHSIKGLEKAEMMRTGYAIEYDIVLPHQLRATLETKLISGLFTAGQTNGTSGYEEAAGQGLIAGINAALKVQGKPELILKRSDAYIGVMIDDLVTKGTLEPYRLLTSRAEYRLILRHDNADMRLTEIGRDIGLVDDERWKAFEIKKNQFDNELKRLDSIKLKPIKETNDRVQDLGFKPLTDAMTAKEFMRRPEIDYATAVSFVGPAAEDLDAKIIELLETEIKYEGYIRKALDQVAKMKRMEEKRIPANIDWDAIDSIATEARQKFKKINPETIGQASRISGVNPADISILMIYLEGNGKAHRKY.

FAD is bound by residues 15–20 (GAGHAG), Ile127, and Ser182. 276-290 (GPRYCPSIEDKIVRF) serves as a coordination point for NAD(+). Gln373 provides a ligand contact to FAD.

The protein belongs to the MnmG family. As to quaternary structure, homodimer. Heterotetramer of two MnmE and two MnmG subunits. Requires FAD as cofactor.

It is found in the cytoplasm. Functionally, NAD-binding protein involved in the addition of a carboxymethylaminomethyl (cmnm) group at the wobble position (U34) of certain tRNAs, forming tRNA-cmnm(5)s(2)U34. This Streptococcus pyogenes serotype M2 (strain MGAS10270) protein is tRNA uridine 5-carboxymethylaminomethyl modification enzyme MnmG.